The chain runs to 136 residues: Large-conductance mechanosensitive channel (136 aa).

The next 2 membrane-spanning stretches (helical) occupy residues 9-29 (AFASRGNVIDMAVGIIIGAAF) and 79-99 (IQTVIDFTIIAFAIFMGLKAI).

It belongs to the MscL family. Homopentamer.

The protein resides in the cell inner membrane. Channel that opens in response to stretch forces in the membrane lipid bilayer. May participate in the regulation of osmotic pressure changes within the cell. The protein is Large-conductance mechanosensitive channel of Shewanella putrefaciens (strain CN-32 / ATCC BAA-453).